The chain runs to 172 residues: Signal peptidase complex catalytic subunit SEC11 (172 aa).

Residues 1-15 are Cytoplasmic-facing; that stretch reads MVNFGAQSIRQTLVQ. Residues 16–36 form a helical; Signal-anchor for type II membrane protein membrane-spanning segment; it reads LLGFAAIFTSSYMFYKGLSIV. Residues 37–172 are Lumenal-facing; sequence ANSESPLVVV…TGLLAFIQGE (136 aa). Active-site charge relay system residues include Ser50, His89, and Asp114. Residues 158–169 are C-terminal short (CTS) helix; sequence GLLGITGLLAFI.

Belongs to the peptidase S26B family. As to quaternary structure, component of the signal peptidase complex (SPC) composed of a catalytic subunit SEC11 and three accessory subunits SPC1, SPC2 and SPC3. The complex induces a local thinning of the ER membrane which is used to measure the length of the signal peptide (SP) h-region of protein substrates. This ensures the selectivity of the complex towards h-regions shorter than 18-20 amino acids. SPC associates with the translocon complex.

It is found in the endoplasmic reticulum membrane. It carries out the reaction Cleavage of hydrophobic, N-terminal signal or leader sequences from secreted and periplasmic proteins.. Its function is as follows. Catalytic component of the signal peptidase complex (SPC) which catalyzes the cleavage of N-terminal signal sequences from nascent proteins as they are translocated into the lumen of the endoplasmic reticulum. Specifically cleaves N-terminal signal peptides that contain a hydrophobic alpha-helix (h-region) shorter than 18-20 amino acids. The protein is Signal peptidase complex catalytic subunit SEC11 (SEC11) of Yarrowia lipolytica (strain CLIB 122 / E 150) (Yeast).